We begin with the raw amino-acid sequence, 385 residues long: Signal transduction histidine-protein kinase/phosphatase DegS (385 aa).

The stretch at glutamine 31–glutamine 141 forms a coiled coil. Serine 76 is modified (phosphoserine). The Histidine kinase domain maps to arginine 183–leucine 385. Residue histidine 189 is modified to Phosphohistidine; by autocatalysis.

Post-translationally, autophosphorylated. Phosphorylated in vitro at Ser-76 by the serine/threonine-protein kinase YbdM, which stimulates the phosphate transfer to DegU.

Its subcellular location is the cytoplasm. The catalysed reaction is ATP + protein L-histidine = ADP + protein N-phospho-L-histidine.. With respect to regulation, regulated via serine phosphorylation of its input domain. Phosphotransfer from DegS to DegU is stimulated by phosphorylation on Ser-76 and by DegQ. Its function is as follows. Member of the two-component regulatory system DegS/DegU, which plays an important role in the transition growth phase. Involved in the control of expression of different cellular functions, including production of degradative enzymes such as the neutral and alkaline proteases, flagellum formation and biofilm formation. Acts both as a protein kinase that undergoes autophosphorylation and subsequently transfers the phosphate to DegU, and as a protein phosphatase that dephosphorylates phospho-DegU. The protein is Signal transduction histidine-protein kinase/phosphatase DegS (degS) of Bacillus subtilis (strain 168).